A 1969-amino-acid polypeptide reads, in one-letter code: Myosin-3 (1969 aa).

Residues 33–82 enclose the Myosin N-terminal SH3-like domain; it reads DSKKNCWIPDPEDGFVAAEIQSTTGDQVTVVTVKGNQITVKKDQCQEMNP. In terms of domain architecture, Myosin motor spans 86 to 791; sequence DKTEDMANLT…VLAKLEDLRD (706 aa). Lysine 130 carries the N6,N6,N6-trimethyllysine modification. 179–186 contributes to the ATP binding site; that stretch reads GESGAGKT. Actin-binding regions lie at residues 667-689 and 770-784; these read LNNL…IPNE and KIGE…GVLA. Residues 794–823 form the IQ domain; that stretch reads LSRIVTMFQSRIRSYLAKAEVRRRYEQQTG. Residues 853–1941 are a coiled coil; the sequence is LKAGKEQEAM…KMRNKIRASA (1089 aa). 3 disordered regions span residues 943–967, 993–1029, and 1134–1153; these read QERH…KKHV, DEMA…EEDK, and ELES…NELQ. Composition is skewed to basic and acidic residues over residues 1001-1029 and 1137-1153; these read SVAK…EEDK and SERN…NELQ.

Belongs to the TRAFAC class myosin-kinesin ATPase superfamily. Myosin family. In terms of assembly, muscle myosin is a hexameric protein that consists of 2 heavy chain subunits (MHC), 2 alkali light chain subunits (MLC) and 2 regulatory light chain subunits (MLC-2).

It is found in the cytoplasm. Its subcellular location is the myofibril. It localises to the sarcomere. The protein resides in the a band. Functionally, essential for muscle contraction. Involved in ovulation likely by regulating the contraction of gonadal myoepithelial sheath cells. The polypeptide is Myosin-3 (Caenorhabditis briggsae).